Here is a 921-residue protein sequence, read N- to C-terminus: Translation initiation factor IF-2 (921 aa).

The interval 1–296 (MADNNTPGDK…PGPQKQRGRL (296 aa)) is disordered. A compositionally biased stretch (low complexity) spans 80–89 (RPSGPRPGSS). Over residues 116–182 (ARVRDMEERR…AKKRFGEGEA (67 aa)) the composition is skewed to basic and acidic residues. Residues 183–257 (PRPATAAPQQ…LGRAPGVAAG (75 aa)) are compositionally biased toward low complexity. The tr-type G domain occupies 417–586 (PRSPVVTVMG…MIALQADILD (170 aa)). The segment at 426-433 (GHVDHGKT) is G1. Residue 426–433 (GHVDHGKT) coordinates GTP. A G2 region spans residues 451–455 (GITQH). The interval 474-477 (DTPG) is G3. GTP is bound by residues 474–478 (DTPGH) and 528–531 (NKID). The segment at 528–531 (NKID) is G4. Residues 564–566 (SAK) are G5.

This sequence belongs to the TRAFAC class translation factor GTPase superfamily. Classic translation factor GTPase family. IF-2 subfamily.

The protein resides in the cytoplasm. Functionally, one of the essential components for the initiation of protein synthesis. Protects formylmethionyl-tRNA from spontaneous hydrolysis and promotes its binding to the 30S ribosomal subunits. Also involved in the hydrolysis of GTP during the formation of the 70S ribosomal complex. The protein is Translation initiation factor IF-2 of Bradyrhizobium sp. (strain BTAi1 / ATCC BAA-1182).